Consider the following 151-residue polypeptide: Myosin light polypeptide 6 (151 aa).

Position 2 is an N-acetylcysteine (cysteine 2). EF-hand domains lie at 7 to 42 (EQTA…LGQN), 84 to 119 (GCFE…LGEK), and 119 to 151 (KMTE…VLSG).

Myosin is a hexamer of 2 heavy chains and 4 light chains.

Functionally, regulatory light chain of myosin. Does not bind calcium. In Gallus gallus (Chicken), this protein is Myosin light polypeptide 6 (MYL6).